The chain runs to 333 residues: Protein farnesyltransferase/geranylgeranyltransferase type-1 subunit alpha (333 aa).

PFTA repeat units lie at residues 61-95 (LSSR…SLKV), 96-130 (DLHV…KLGP), 132-166 (ARNS…NLGG), 167-200 (WEDE…RSPV), and 207-241 (MRES…DEST).

The protein belongs to the protein prenyltransferase subunit alpha family. In terms of assembly, heterodimer of FTA and FTB (farnesyltransferase). Heterodimer of an alpha and a beta subunit. It depends on Mg(2+) as a cofactor.

The catalysed reaction is L-cysteinyl-[protein] + (2E,6E)-farnesyl diphosphate = S-(2E,6E)-farnesyl-L-cysteinyl-[protein] + diphosphate. It carries out the reaction geranylgeranyl diphosphate + L-cysteinyl-[protein] = S-geranylgeranyl-L-cysteinyl-[protein] + diphosphate. Functionally, essential subunit of both the farnesyltransferase and the geranylgeranyltransferase complex. Contributes to the transfer of a farnesyl or geranylgeranyl moiety from farnesyl or geranylgeranyl diphosphate to a cysteine at the fourth position from the C-terminus of several proteins having the C-terminal sequence Cys-aliphatic-aliphatic-X. This Pisum sativum (Garden pea) protein is Protein farnesyltransferase/geranylgeranyltransferase type-1 subunit alpha (FTA).